Reading from the N-terminus, the 101-residue chain is Ubiquitin-related modifier 1 (101 aa).

A 1-thioglycine modification is found at Gly-101. Residue Gly-101 forms a Glycyl lysine isopeptide (Gly-Lys) (interchain with K-? in acceptor proteins) linkage.

It belongs to the URM1 family. In terms of processing, C-terminal thiocarboxylation occurs in 2 steps, it is first acyl-adenylated (-COAMP) via the hesA/moeB/thiF part of UBA4, then thiocarboxylated (-COSH) via the rhodanese domain of UBA4.

It is found in the cytoplasm. It participates in tRNA modification; 5-methoxycarbonylmethyl-2-thiouridine-tRNA biosynthesis. Its function is as follows. Acts as a sulfur carrier required for 2-thiolation of mcm(5)S(2)U at tRNA wobble positions of cytosolic tRNA(Lys), tRNA(Glu) and tRNA(Gln). Serves as sulfur donor in tRNA 2-thiolation reaction by being thiocarboxylated (-COSH) at its C-terminus by the MOCS3 homolog UBA4. The sulfur is then transferred to tRNA to form 2-thiolation of mcm(5)S(2)U. Prior mcm(5) tRNA modification by the elongator complex is required for 2-thiolation. Also acts as a ubiquitin-like protein (UBL) that is covalently conjugated via an isopeptide bond to lysine residues of target proteins such as AHP1. The thiocarboxylated form serves as substrate for conjugation and oxidative stress specifically induces the formation of UBL-protein conjugates. The sequence is that of Ubiquitin-related modifier 1 from Kluyveromyces lactis (strain ATCC 8585 / CBS 2359 / DSM 70799 / NBRC 1267 / NRRL Y-1140 / WM37) (Yeast).